The primary structure comprises 203 residues: Large ribosomal subunit protein bL25 (203 aa).

Belongs to the bacterial ribosomal protein bL25 family. CTC subfamily. As to quaternary structure, part of the 50S ribosomal subunit; part of the 5S rRNA/L5/L18/L25 subcomplex. Contacts the 5S rRNA. Binds to the 5S rRNA independently of L5 and L18.

This is one of the proteins that binds to the 5S RNA in the ribosome where it forms part of the central protuberance. This Rickettsia conorii (strain ATCC VR-613 / Malish 7) protein is Large ribosomal subunit protein bL25.